Here is a 25-residue protein sequence, read N- to C-terminus: C-reactive protein P2 subunit 4 (25 aa).

In terms of domain architecture, Pentraxin (PTX) spans 1–25 (GRSLVFPEETANSFVELFPAKELSL).

Belongs to the pentraxin family. In terms of assembly, heteropentamer. Discoid arrangement of 5 non-covalently bound subunits 1, 2, 3 and 4. The cofactor is Ca(2+). In terms of processing, glycosylated.

The protein localises to the secreted. In terms of biological role, displays several functions associated with host defense: it promotes agglutination, bacterial capsular swelling, phagocytosis, and complement fixation through its calcium-dependent binding to phosphorylcholine. The sequence is that of C-reactive protein P2 subunit 4 from Gadus morhua (Atlantic cod).